We begin with the raw amino-acid sequence, 382 residues long: Histidinol-phosphate aminotransferase (382 aa).

At lysine 215 the chain carries N6-(pyridoxal phosphate)lysine. The disordered stretch occupies residues 360 to 382 (NSNNIDNQSKTHSQTSSIRKGTI).

This sequence belongs to the class-II pyridoxal-phosphate-dependent aminotransferase family. Histidinol-phosphate aminotransferase subfamily. As to quaternary structure, homodimer. The cofactor is pyridoxal 5'-phosphate.

It carries out the reaction L-histidinol phosphate + 2-oxoglutarate = 3-(imidazol-4-yl)-2-oxopropyl phosphate + L-glutamate. Its pathway is amino-acid biosynthesis; L-histidine biosynthesis; L-histidine from 5-phospho-alpha-D-ribose 1-diphosphate: step 7/9. The sequence is that of Histidinol-phosphate aminotransferase from Yersinia pseudotuberculosis serotype IB (strain PB1/+).